A 130-amino-acid chain; its full sequence is Histone H2A type 1-E (130 aa).

A disordered region spans residues 1 to 22 (MSGRGKQGGKARAKAKTRSSRA). Serine 2 bears the N-acetylserine mark. Serine 2 is modified (phosphoserine; by RPS6KA5). Arginine 4 carries the post-translational modification Citrulline; alternate. Arginine 4 carries the post-translational modification Symmetric dimethylarginine; by PRMT5; alternate. Lysine 6 and lysine 10 each carry N6-(2-hydroxyisobutyryl)lysine; alternate. Lysine 6 bears the N6-acetyllysine; alternate mark. Over residues 7 to 19 (QGGKARAKAKTRS) the composition is skewed to basic residues. Position 10 is an N6-lactoyllysine; alternate (lysine 10). The residue at position 10 (lysine 10) is an N6-succinyllysine; alternate. Residues lysine 14 and lysine 16 each participate in a glycyl lysine isopeptide (Lys-Gly) (interchain with G-Cter in ubiquitin) cross-link. N6-(2-hydroxyisobutyryl)lysine; alternate is present on lysine 37. At lysine 37 the chain carries N6-(beta-hydroxybutyryl)lysine; alternate. Position 37 is an N6-crotonyllysine; alternate (lysine 37). Lysine 75 and lysine 76 each carry N6-(2-hydroxyisobutyryl)lysine. An N6-(2-hydroxyisobutyryl)lysine; alternate modification is found at lysine 96. Position 96 is an N6-succinyllysine; alternate (lysine 96). Position 96 is an N6-glutaryllysine; alternate (lysine 96). Residue glutamine 105 is modified to N5-methylglutamine. Lysine 119 is subject to N6-(2-hydroxyisobutyryl)lysine; alternate. 2 positions are modified to N6-crotonyllysine; alternate: lysine 119 and lysine 120. N6-glutaryllysine; alternate is present on residues lysine 119 and lysine 120. Residue lysine 120 forms a Glycyl lysine isopeptide (Lys-Gly) (interchain with G-Cter in ubiquitin); alternate linkage. Residue threonine 121 is modified to Phosphothreonine; by DCAF1. N6-crotonyllysine; alternate is present on lysine 126. Residue lysine 126 is modified to N6-glutaryllysine; alternate.

Belongs to the histone H2A family. As to quaternary structure, the nucleosome is a histone octamer containing two molecules each of H2A, H2B, H3 and H4 assembled in one H3-H4 heterotetramer and two H2A-H2B heterodimers. The octamer wraps approximately 147 bp of DNA. Deiminated on Arg-4 in granulocytes upon calcium entry. Post-translationally, monoubiquitination of Lys-120 (H2AK119Ub) by RING1, TRIM37 and RNF2/RING2 complex gives a specific tag for epigenetic transcriptional repression and participates in X chromosome inactivation of female mammals. It is involved in the initiation of both imprinted and random X inactivation. Ubiquitinated H2A is enriched in inactive X chromosome chromatin. Ubiquitination of H2A functions downstream of methylation of 'Lys-27' of histone H3 (H3K27me). H2AK119Ub by RNF2/RING2 can also be induced by ultraviolet and may be involved in DNA repair. Following DNA double-strand breaks (DSBs), it is ubiquitinated through 'Lys-63' linkage of ubiquitin moieties by the E2 ligase UBE2N and the E3 ligases RNF8 and RNF168, leading to the recruitment of repair proteins to sites of DNA damage. Ubiquitination at Lys-14 and Lys-16 (H2AK13Ub and H2AK15Ub, respectively) in response to DNA damage is initiated by RNF168 that mediates monoubiquitination at these 2 sites, and 'Lys-63'-linked ubiquitin are then conjugated to monoubiquitin; RNF8 is able to extend 'Lys-63'-linked ubiquitin chains in vitro. H2AK119Ub and ionizing radiation-induced 'Lys-63'-linked ubiquitination (H2AK13Ub and H2AK15Ub) are distinct events. In terms of processing, phosphorylation on Ser-2 (H2AS1ph) is enhanced during mitosis. Phosphorylation on Ser-2 by RPS6KA5/MSK1 directly represses transcription. Acetylation of H3 inhibits Ser-2 phosphorylation by RPS6KA5/MSK1. Phosphorylation at Thr-121 (H2AT120ph) by DCAF1 is present in the regulatory region of many tumor suppresor genes and down-regulates their transcription. Symmetric dimethylation on Arg-4 by the PRDM1/PRMT5 complex may play a crucial role in the germ-cell lineage. Post-translationally, glutamine methylation at Gln-105 (H2AQ104me) by FBL is specifically dedicated to polymerase I. It is present at 35S ribosomal DNA locus and impairs binding of the FACT complex. In terms of processing, crotonylation (Kcr) is specifically present in male germ cells and marks testis-specific genes in post-meiotic cells, including X-linked genes that escape sex chromosome inactivation in haploid cells. Crotonylation marks active promoters and enhancers and confers resistance to transcriptional repressors. It is also associated with post-meiotically activated genes on autosomes. Lactylated in macrophages by EP300/P300 by using lactoyl-CoA directly derived from endogenous or exogenous lactate, leading to stimulates gene transcription.

It localises to the nucleus. Its subcellular location is the chromosome. Its function is as follows. Core component of nucleosome. Nucleosomes wrap and compact DNA into chromatin, limiting DNA accessibility to the cellular machineries which require DNA as a template. Histones thereby play a central role in transcription regulation, DNA repair, DNA replication and chromosomal stability. DNA accessibility is regulated via a complex set of post-translational modifications of histones, also called histone code, and nucleosome remodeling. The sequence is that of Histone H2A type 1-E from Rattus norvegicus (Rat).